A 109-amino-acid chain; its full sequence is UPF0482 protein ESA_01750 (109 aa).

An N-terminal signal peptide occupies residues 1-24 (MNKFLRHSLLLALLTGALSGVANA). The span at 38-55 (RTRQDAAMDKEQWNDTRS) shows a compositional bias: basic and acidic residues. Residues 38–63 (RTRQDAAMDKEQWNDTRSLRQKVNKR) are disordered.

This sequence belongs to the UPF0482 family.

In Cronobacter sakazakii (strain ATCC BAA-894) (Enterobacter sakazakii), this protein is UPF0482 protein ESA_01750.